The chain runs to 291 residues: tRNA dimethylallyltransferase (291 aa).

Residue 17–24 (GPTASGKS) coordinates ATP. Residue 19–24 (TASGKS) coordinates substrate.

Belongs to the IPP transferase family. In terms of assembly, monomer. It depends on Mg(2+) as a cofactor.

The enzyme catalyses adenosine(37) in tRNA + dimethylallyl diphosphate = N(6)-dimethylallyladenosine(37) in tRNA + diphosphate. Catalyzes the transfer of a dimethylallyl group onto the adenine at position 37 in tRNAs that read codons beginning with uridine, leading to the formation of N6-(dimethylallyl)adenosine (i(6)A). This chain is tRNA dimethylallyltransferase, found in Cereibacter sphaeroides (strain ATCC 17025 / ATH 2.4.3) (Rhodobacter sphaeroides).